A 103-amino-acid polypeptide reads, in one-letter code: Secreted Ly-6/uPAR-related protein 1 (103 aa).

Positions 1-22 (MASRWAVQLLLVAAWSMGCGEA) are cleaved as a signal peptide. The 50-residue stretch at 24-73 (KCYTCKEPMTSASCRTITRCKPEDTACMTTLVTVEAEYPFNQSPVVTRSC) folds into the UPAR/Ly6 domain. 5 disulfides stabilise this stretch: Cys25–Cys50, Cys28–Cys37, Cys43–Cys73, Cys77–Cys93, and Cys94–Cys99.

In terms of assembly, homodimer. Interacts with PLAU. Interacts with CHRNA7. As to expression, granulocytes. Expressed in skin. Predominantly expressed in the granular layer of skin, notably the acrosyringium. Identified in several biological fluids such as sweat, saliva, tears, plasma and urine.

It is found in the secreted. Has an antitumor activity. Was found to be a marker of late differentiation of the skin. Implicated in maintaining the physiological and structural integrity of the keratinocyte layers of the skin. In vitro down-regulates keratinocyte proliferation; the function may involve the proposed role as modulator of nicotinic acetylcholine receptors (nAChRs) activity. In vitro inhibits alpha-7-dependent nAChR currents in an allosteric manner. In T cells may be involved in regulation of intracellular Ca(2+) signaling. Seems to have an immunomodulatory function in the cornea. The function may implicate a possible role as a scavenger receptor for PLAU thereby blocking PLAU-dependent functions of PLAUR such as in cell migration and proliferation. This Homo sapiens (Human) protein is Secreted Ly-6/uPAR-related protein 1 (SLURP1).